The chain runs to 432 residues: MTNVVVVGSQWGDEGKGKIVDWLSERADIVVRYQGGHNAGHTLVIDGTSYKLSLLPSGVVRPGKMAVIGNGVVVDPHALIAEIGRLEAQGVTVTPDNLRIADNATLILSLHRELDAMREDAASNSGTKIGTTRRGIGPAYEDKVGRRAIRVMDLADLDSLAGKVDRILTHHNALRRGLGVAEVSHQTIMDELTSIADRVLPFRDTVWLFLDKERRKGSRILFEGAQGSLLDIDHGTYPFVTSSNTVAGQAAAGSGMGPGSLGYILGITKAYTTRVGEGPFPTELKDAIGEFLGEKGHEFGVVTGRKRRCGWFDAALVRQSIATNGITGIALTKLDVLDGLEELKICVGYMLDGEQIDHLPASQGAQARVEPVYITLEGWKESTVGARSWADLPAQAIKYVRQVEELIGAPVALLSTSPERDDTILVTDPFED.

GTP is bound by residues 12–18 (GDEGKGK) and 40–42 (GHT). Residue Asp-13 is the Proton acceptor of the active site. Mg(2+)-binding residues include Asp-13 and Gly-40. Residues 13 to 16 (DEGK), 38 to 41 (NAGH), Thr-132, Arg-146, Gln-226, Thr-241, and Arg-305 each bind IMP. Residue His-41 is the Proton donor of the active site. Position 301–307 (301–307 (VVTGRKR)) interacts with substrate. GTP is bound by residues Arg-307, 333 to 335 (KLD), and 415 to 417 (STS).

Belongs to the adenylosuccinate synthetase family. As to quaternary structure, homodimer. Mg(2+) serves as cofactor.

It localises to the cytoplasm. It carries out the reaction IMP + L-aspartate + GTP = N(6)-(1,2-dicarboxyethyl)-AMP + GDP + phosphate + 2 H(+). The protein operates within purine metabolism; AMP biosynthesis via de novo pathway; AMP from IMP: step 1/2. Functionally, plays an important role in the de novo pathway of purine nucleotide biosynthesis. Catalyzes the first committed step in the biosynthesis of AMP from IMP. The polypeptide is Adenylosuccinate synthetase (Rhizobium leguminosarum bv. trifolii (strain WSM2304)).